The chain runs to 326 residues: Phosphate acyltransferase (326 aa).

Belongs to the PlsX family. Homodimer. Probably interacts with PlsY.

The protein resides in the cytoplasm. It carries out the reaction a fatty acyl-[ACP] + phosphate = an acyl phosphate + holo-[ACP]. It participates in lipid metabolism; phospholipid metabolism. Functionally, catalyzes the reversible formation of acyl-phosphate (acyl-PO(4)) from acyl-[acyl-carrier-protein] (acyl-ACP). This enzyme utilizes acyl-ACP as fatty acyl donor, but not acyl-CoA. This is Phosphate acyltransferase from Macrococcus caseolyticus (strain JCSC5402) (Macrococcoides caseolyticum).